Reading from the N-terminus, the 1044-residue chain is Elongation factor 3A (1044 aa).

Ser-2 carries the post-translational modification N-acetylserine. The stretch at 5–42 (QQSIKVLEELFQKLSVATADNRHEIASEVASFLNGNII) is one HEAT 1 repeat. ADP contacts are provided by Ile-42, His-44, and Ser-83. HEAT repeat units lie at residues 86–123 (PYIVQLVPAICTNAGNKDKEIQSVASETLISIVNAVNP), 125–162 (AIKALLPHLTNAIVETNKWQEKIAILAAISAMVDAAKD), 166–203 (LRMPELIPVLSETMWDTKKEVKAAATAAMTKATETVDN), 205–241 (DIERFIPSLIQCIADPTEVPETVHLLGATTFVAEVTP), 242–279 (ATLSIMVPLLSRGLNERETGIKRKSAVIIDNMCKLVED), and 285–323 (PFLGKLLPGLKSNFATIADPEAREVTLRALKTLRRVGNV). N6,N6,N6-trimethyllysine occurs at positions 187 and 196. Lys-350 participates in a covalent cross-link: Glycyl lysine isopeptide (Lys-Gly) (interchain with G-Cter in ubiquitin). Residues Thr-392, His-396, and Glu-397 each contribute to the ADP site. One can recognise an ABC transporter 1 domain in the interval 426-641 (DEGEDLCNCE…CPAAKAYEEL (216 aa)). Lys-636 participates in a covalent cross-link: Glycyl lysine isopeptide (Lys-Gly) (interchain with G-Cter in ubiquitin). Residue Ser-642 is modified to Phosphoserine. An ABC transporter 2 domain is found at 667-993 (VKVTNMEFQY…AGPRIEKKED (327 aa)). Residue Asn-703 participates in ADP binding. N6,N6,N6-trimethyllysine is present on Lys-789. ADP contacts are provided by Glu-922, Asn-925, and His-951. Thr-972 is modified (phosphothreonine). Ser-974 is modified (phosphoserine). Residues 974–1044 (SGHNWVSGQG…DAYVSSDEEF (71 aa)) are disordered. The span at 1007–1031 (GGKKKKKLSSAELRKKKKERMKKKK) shows a compositional bias: basic residues. A phosphoserine mark is found at Ser-1039 and Ser-1040.

Belongs to the ABC transporter superfamily. ABCF family. EF3 subfamily. Monomer. Interacts with elongation factor 1A (eEF1A). Interacts through its N-terminus with 18S rRNA. Associates with ribosomes; preferentially binds ribosomes in the post-translocational state (bearing a peptidyl-tRNA in the P-site) in the presence of ATP, suggesting that ATP hydrolysis is required for ribosome dissociation.

Its subcellular location is the cytoplasm. It is found in the cytosol. The catalysed reaction is ATP + H2O = ADP + phosphate + H(+). The protein operates within protein biosynthesis; polypeptide chain elongation. With respect to regulation, inhibited by the translational inhibitors neomycin and alpha-sarcin, which suppress the ATPase activity. In terms of biological role, ribosome-dependent ATPase that functions in cytoplasmic translation elongation. Required for the ATP-dependent release of deacylated tRNA from the ribosomal E-site during protein biosynthesis. Stimulates the eEF1A-dependent binding of aminoacyl-tRNA to the ribosomal A-site, which has reduced affinity for tRNA as long as the E-site is occupied. Assists translation termination by stimulating the release of nascent protein from the ribosome by release factors. In nutrient-replete conditions, occupies the space on the ribosome bound by GCN1 during amino acid starvation conditions, and therefore indirectly negatively regulates GCN2 kinase activity in replete conditions. This chain is Elongation factor 3A (YEF3), found in Saccharomyces cerevisiae (strain ATCC 204508 / S288c) (Baker's yeast).